A 185-amino-acid chain; its full sequence is MSQLTIYNAVSEGNDPPLPSLHTTDAAIVAAELSQRGIRFQQWPTHDELDAASSQEEILAAYSAEIAEVQAAGGYQTVDAISLGPDHPQRAELRQKFLSEHTHSEDEVRFFVDGRGLFCLHIGDEVLQVLCERNDWLSVPAGTRHWFDMGERPCFSAIRFFNNQDGWVAQFTGDPIAKRYPLLGS.

4 residues coordinate Fe(2+): His101, His103, Glu107, and His145. Residues His101, His103, Glu107, and His145 each contribute to the Ni(2+) site.

It belongs to the acireductone dioxygenase (ARD) family. In terms of assembly, monomer. Fe(2+) is required as a cofactor. It depends on Ni(2+) as a cofactor.

It carries out the reaction 1,2-dihydroxy-5-(methylsulfanyl)pent-1-en-3-one + O2 = 3-(methylsulfanyl)propanoate + CO + formate + 2 H(+). It catalyses the reaction 1,2-dihydroxy-5-(methylsulfanyl)pent-1-en-3-one + O2 = 4-methylsulfanyl-2-oxobutanoate + formate + 2 H(+). Its pathway is amino-acid biosynthesis; L-methionine biosynthesis via salvage pathway; L-methionine from S-methyl-5-thio-alpha-D-ribose 1-phosphate: step 5/6. In terms of biological role, catalyzes 2 different reactions between oxygen and the acireductone 1,2-dihydroxy-3-keto-5-methylthiopentene (DHK-MTPene) depending upon the metal bound in the active site. Fe-containing acireductone dioxygenase (Fe-ARD) produces formate and 2-keto-4-methylthiobutyrate (KMTB), the alpha-ketoacid precursor of methionine in the methionine recycle pathway. Ni-containing acireductone dioxygenase (Ni-ARD) produces methylthiopropionate, carbon monoxide and formate, and does not lie on the methionine recycle pathway. The polypeptide is Acireductone dioxygenase (Synechococcus sp. (strain RCC307)).